Reading from the N-terminus, the 216-residue chain is Uracil phosphoribosyltransferase (216 aa).

5-phospho-alpha-D-ribose 1-diphosphate-binding positions include Arg85, Arg110, and 135-143 (DPMVATGYS). Residues Ile200 and 205–207 (GDA) contribute to the uracil site. Asp206 is a binding site for 5-phospho-alpha-D-ribose 1-diphosphate.

The protein belongs to the UPRTase family. Mg(2+) serves as cofactor.

It catalyses the reaction UMP + diphosphate = 5-phospho-alpha-D-ribose 1-diphosphate + uracil. It functions in the pathway pyrimidine metabolism; UMP biosynthesis via salvage pathway; UMP from uracil: step 1/1. Its activity is regulated as follows. Allosterically activated by GTP. Its function is as follows. Catalyzes the conversion of uracil and 5-phospho-alpha-D-ribose 1-diphosphate (PRPP) to UMP and diphosphate. This is Uracil phosphoribosyltransferase from Burkholderia vietnamiensis (strain G4 / LMG 22486) (Burkholderia cepacia (strain R1808)).